Consider the following 471-residue polypeptide: 3-isopropylmalate dehydratase large subunit (471 aa).

[4Fe-4S] cluster is bound by residues C349, C409, and C412.

It belongs to the aconitase/IPM isomerase family. LeuC type 1 subfamily. Heterodimer of LeuC and LeuD. The cofactor is [4Fe-4S] cluster.

The enzyme catalyses (2R,3S)-3-isopropylmalate = (2S)-2-isopropylmalate. It functions in the pathway amino-acid biosynthesis; L-leucine biosynthesis; L-leucine from 3-methyl-2-oxobutanoate: step 2/4. Functionally, catalyzes the isomerization between 2-isopropylmalate and 3-isopropylmalate, via the formation of 2-isopropylmaleate. The protein is 3-isopropylmalate dehydratase large subunit of Aliivibrio fischeri (strain MJ11) (Vibrio fischeri).